The primary structure comprises 190 residues: Large ribosomal subunit protein uL10 (190 aa).

Positions 170–190 (AAGAPAEAAPVEAPAAETVDA) are disordered.

It belongs to the universal ribosomal protein uL10 family. In terms of assembly, part of the ribosomal stalk of the 50S ribosomal subunit. The N-terminus interacts with L11 and the large rRNA to form the base of the stalk. The C-terminus forms an elongated spine to which L12 dimers bind in a sequential fashion forming a multimeric L10(L12)X complex.

Functionally, forms part of the ribosomal stalk, playing a central role in the interaction of the ribosome with GTP-bound translation factors. The chain is Large ribosomal subunit protein uL10 from Kineococcus radiotolerans (strain ATCC BAA-149 / DSM 14245 / SRS30216).